Here is a 461-residue protein sequence, read N- to C-terminus: Cysteine--tRNA ligase (461 aa).

Position 28 (Cys-28) interacts with Zn(2+). Residues 30-40 (ITIYDLCHIGH) carry the 'HIGH' region motif. Residues Cys-209, His-234, and Glu-238 each contribute to the Zn(2+) site. The short motif at 266–270 (KMSKS) is the 'KMSKS' region element. Lys-269 lines the ATP pocket.

It belongs to the class-I aminoacyl-tRNA synthetase family. As to quaternary structure, monomer. Zn(2+) serves as cofactor.

It is found in the cytoplasm. The catalysed reaction is tRNA(Cys) + L-cysteine + ATP = L-cysteinyl-tRNA(Cys) + AMP + diphosphate. This Photorhabdus laumondii subsp. laumondii (strain DSM 15139 / CIP 105565 / TT01) (Photorhabdus luminescens subsp. laumondii) protein is Cysteine--tRNA ligase.